Consider the following 621-residue polypeptide: DnaJ homolog subfamily C member 2 (621 aa).

At M1 the chain carries N-acetylmethionine. Phosphoserine occurs at positions 47, 49, 60, and 63. The J domain occupies 88–161 (DHYAVLGLGH…VKRRAFNSVD (74 aa)). The segment at 160 to 250 (VDPTFDNSVP…RDERRWIEKQ (91 aa)) is ZRF1-UBD. S183 is modified (phosphoserine). 2 disordered regions span residues 294–315 (EKKA…QRQA) and 426–453 (KEEA…GSKH). 2 SANT domains span residues 449–511 (NGSK…KLDP) and 549–604 (TDFT…EMVK).

In terms of assembly, component of ribosome-associated complex (RAC), a heterodimer composed of Hsp70/DnaK-type chaperone HSPA14 and Hsp40/DnaJ-type chaperone DNAJC2. Interacts (via ZRF1-UBD region) with ID1. Phosphorylated in M (mitotic) phase.

Its subcellular location is the nucleus. The protein localises to the cytoplasm. It localises to the cytosol. Functionally, acts both as a chaperone in the cytosol and as a chromatin regulator in the nucleus. When cytosolic, acts as a molecular chaperone: component of the ribosome-associated complex (RAC), a complex involved in folding or maintaining nascent polypeptides in a folding-competent state. In the RAC complex, stimulates the ATPase activity of the ribosome-associated pool of Hsp70-type chaperones HSPA14 that bind to the nascent polypeptide chain. When nuclear, mediates the switching from polycomb-repressed genes to an active state: specifically recruited at histone H2A ubiquitinated at 'Lys-119' (H2AK119ub), and promotes the displacement of the polycomb PRC1 complex from chromatin, thereby facilitating transcription activation. The protein is DnaJ homolog subfamily C member 2 (DNAJC2) of Bos taurus (Bovine).